Here is a 356-residue protein sequence, read N- to C-terminus: MNILNVVRRFEFQLFLVNVIIALFFYFENSAYFSSNNITTIFQYLAEIGIIAIGEAMLMLCGEIDLSPPALANFVPLITLTIYNSIYQAISPTPAIVVSILLSLGLASLIGLMNGLITTKAKVNSLITTVGTLFLFNGIALIYSGGYPESFPYFRFLGGTVSILPVPFIWSLGALVFLILLLHYTKIGVWTIAAGSNPTGASEVGVPVDRVKIINFIIMANIGALVGIIQGSRVLTIGATNFTADVVLEGIAAAVIGGTSLVGGKGSLVGAFLGSVFISELLNGFNILGINAYEFDAILGGAIVVVMVLSYYAKRASYKLKSIATATSSSPEGKDRITKILKFKIQKIYRRVEENE.

10 helical membrane passes run 14–34, 41–61, 70–90, 96–116, 126–146, 161–181, 211–231, 242–262, 266–286, and 287–307; these read LFLV…AYFS, IFQY…LMLC, ALAN…YQAI, IVVS…MNGL, LITT…YSGG, VSIL…LILL, VKII…IIQG, FTAD…TSLV, GSLV…NGFN, and ILGI…VVVM.

This sequence belongs to the binding-protein-dependent transport system permease family. In terms of assembly, the complex is composed of two ATP-binding proteins (XylG), two transmembrane proteins (XylH) and a solute-binding protein (XylF).

It localises to the cell membrane. In terms of biological role, part of the ABC transporter complex XylFGH involved in the uptake of xylose and arabinose. Responsible for the translocation of the substrate across the membrane. This chain is Xylose/arabinose import permease protein XylH, found in Sulfolobus acidocaldarius (strain ATCC 33909 / DSM 639 / JCM 8929 / NBRC 15157 / NCIMB 11770).